An 81-amino-acid chain; its full sequence is Small ribosomal subunit protein bS20 (81 aa).

This sequence belongs to the bacterial ribosomal protein bS20 family.

Binds directly to 16S ribosomal RNA. This Mycoplasma mycoides subsp. mycoides SC (strain CCUG 32753 / NCTC 10114 / PG1) protein is Small ribosomal subunit protein bS20.